Reading from the N-terminus, the 670-residue chain is ATP-dependent DNA helicase Rep (670 aa).

The UvrD-like helicase ATP-binding domain occupies 1–277 (MLFNEHQKKA…IIMQHNYRSS (277 aa)). ATP contacts are provided by residues 22–29 (AGAGSGKT) and Arg275. A UvrD-like helicase C-terminal domain is found at 278–562 (GRILKVANAL…QLMTLHASKG (285 aa)).

This sequence belongs to the helicase family. UvrD subfamily. In terms of assembly, homodimer.

It carries out the reaction Couples ATP hydrolysis with the unwinding of duplex DNA by translocating in the 3'-5' direction.. The enzyme catalyses ATP + H2O = ADP + phosphate + H(+). In terms of biological role, rep helicase is a single-stranded DNA-dependent ATPase involved in DNA replication; it can initiate unwinding at a nick in the DNA. It binds to the single-stranded DNA and acts in a progressive fashion along the DNA in the 3' to 5' direction. The protein is ATP-dependent DNA helicase Rep of Buchnera aphidicola subsp. Baizongia pistaciae (strain Bp).